The following is a 459-amino-acid chain: Ribulose bisphosphate carboxylase large chain (459 aa).

K4 is subject to N6,N6,N6-trimethyllysine. N113 and T163 together coordinate substrate. K165 functions as the Proton acceptor in the catalytic mechanism. A substrate-binding site is contributed by K167. Mg(2+)-binding residues include K191, D193, and E194. K191 carries the N6-carboxylysine modification. H284 acts as the Proton acceptor in catalysis. Substrate-binding residues include R285, H317, and S369.

It belongs to the RuBisCO large chain family. Type I subfamily. In terms of assembly, heterohexadecamer of 8 large chains and 8 small chains; disulfide-linked. The disulfide link is formed within the large subunit homodimers. Requires Mg(2+) as cofactor. In terms of processing, the disulfide bond which can form in the large chain dimeric partners within the hexadecamer appears to be associated with oxidative stress and protein turnover.

It is found in the plastid. The protein resides in the chloroplast. The catalysed reaction is 2 (2R)-3-phosphoglycerate + 2 H(+) = D-ribulose 1,5-bisphosphate + CO2 + H2O. It carries out the reaction D-ribulose 1,5-bisphosphate + O2 = 2-phosphoglycolate + (2R)-3-phosphoglycerate + 2 H(+). RuBisCO catalyzes two reactions: the carboxylation of D-ribulose 1,5-bisphosphate, the primary event in carbon dioxide fixation, as well as the oxidative fragmentation of the pentose substrate in the photorespiration process. Both reactions occur simultaneously and in competition at the same active site. In Parnassia fimbriata (Fringed grass-of-Parnassus), this protein is Ribulose bisphosphate carboxylase large chain.